The chain runs to 138 residues: Small ribosomal subunit protein uS11c (138 aa).

The segment at 1 to 22 is disordered; the sequence is MAKSIPKTGSRKNVRIGSRNQT.

This sequence belongs to the universal ribosomal protein uS11 family. Part of the 30S ribosomal subunit.

The protein resides in the plastid. It localises to the chloroplast. The sequence is that of Small ribosomal subunit protein uS11c from Phaseolus angularis (Azuki bean).